Consider the following 152-residue polypeptide: MRKAIFPGSFDPITLGHEDIIKRGIPLFDEIVIAIGVNAEKKYMFSLEERKRFIEETFKDEPKVSVITYEGLTIDLAKKQKAHFILRGLRNPADFEFEKAIAHTNRKLSKIETVFLLTAASTSFISSSIVRDVLRHGGEYEMLVPDAVRVKK.

S9 contacts substrate. Residues 9 to 10 (SF) and H17 each bind ATP. Substrate is bound by residues K41, T73, and R87. Residues 88-90 (GLR), E98, and 122-128 (TSFISSS) each bind ATP.

It belongs to the bacterial CoaD family. Homohexamer. It depends on Mg(2+) as a cofactor.

The protein localises to the cytoplasm. The catalysed reaction is (R)-4'-phosphopantetheine + ATP + H(+) = 3'-dephospho-CoA + diphosphate. It participates in cofactor biosynthesis; coenzyme A biosynthesis; CoA from (R)-pantothenate: step 4/5. Functionally, reversibly transfers an adenylyl group from ATP to 4'-phosphopantetheine, yielding dephospho-CoA (dPCoA) and pyrophosphate. The protein is Phosphopantetheine adenylyltransferase of Flavobacterium johnsoniae (strain ATCC 17061 / DSM 2064 / JCM 8514 / BCRC 14874 / CCUG 350202 / NBRC 14942 / NCIMB 11054 / UW101) (Cytophaga johnsonae).